A 122-amino-acid chain; its full sequence is Large ribosomal subunit protein uL14 (122 aa).

The protein belongs to the universal ribosomal protein uL14 family. In terms of assembly, part of the 50S ribosomal subunit. Forms a cluster with proteins L3 and L19. In the 70S ribosome, L14 and L19 interact and together make contacts with the 16S rRNA in bridges B5 and B8.

In terms of biological role, binds to 23S rRNA. Forms part of two intersubunit bridges in the 70S ribosome. The sequence is that of Large ribosomal subunit protein uL14 from Shewanella sp. (strain ANA-3).